The following is an 871-amino-acid chain: uncharacterized protein (871 aa).

Helical transmembrane passes span 11–31 (AFVSSLVFNFAIFCAFIGLFL), 92–112 (YLFTFGALCILGCLVLFPILL), 139–159 (FYAHVFLSWLFFGFTIFIIYR), 380–400 (TILTLMIIFWAFPVAVVGCIS), 422–442 (LLGIITGILPSVALSILMSLV), 475–495 (VQVFLVTTMTSAATSAVVQVI), 520–540 (FLLQGLSIPGGALLQIVTLLL), 562–582 (LSAPSWGTVYPVYSLLVTIMI), 586–606 (IIAPIIIGFAAVAFVLIYFAY), 629–649 (LFQVFVGLYLAEVCLIGLFVL), and 653–673 (WGATVLEAVFLGFTVACHLYF). A phosphoserine mark is found at Ser725, Ser726, Ser727, Ser729, Ser737, and Ser761. Over residues 727–740 (SGSDEFLETSSRTS) the composition is skewed to polar residues. Residues 727–746 (SGSDEFLETSSRTSENTKEK) are disordered.

Belongs to the CSC1 (TC 1.A.17) family.

The protein resides in the golgi apparatus membrane. Functionally, acts as an osmosensitive calcium-permeable cation channel. This is an uncharacterized protein from Schizosaccharomyces pombe (strain 972 / ATCC 24843) (Fission yeast).